The primary structure comprises 239 residues: Phosducin-like protein 3 (239 aa).

Residue Met-1 is modified to N-acetylmethionine. Residues 32-180 (EAEEEQRILQ…EGDIKAQFIG (149 aa)) form the Phosducin domain. Residues Ser-43, Ser-234, and Ser-236 each carry the phosphoserine modification. The tract at residues 91 to 239 (FGEVLEISGK…MKRDSDSEGD (149 aa)) is thioredoxin fold.

This sequence belongs to the phosducin family. Interacts (via thioredoxin fold region) with KDR/VEGFR2 (via juxtamembrane domain). Forms ternary complexes with the chaperonin CCT complex and actin substrate, leading to inhibition of actin folding. Interacts with XIAP (via BIR 3 and RING domain). Interacts with HSP90AA1 and HSP90AB1. Post-translationally, N-terminal methionine acetylation destabilizes the protein.

It is found in the cytoplasm. The protein localises to the perinuclear region. It localises to the endoplasmic reticulum. Its function is as follows. Acts as a chaperone for the angiogenic VEGF receptor KDR/VEGFR2, increasing its abundance by inhibiting its ubiquitination and degradation. Inhibits the folding activity of the chaperonin-containing T-complex (CCT) which leads to inhibition of cytoskeletal actin folding. Acts as a chaperone during heat shock alongside HSP90 and HSP40/70 chaperone complexes. Modulates the activation of caspases during apoptosis. The polypeptide is Phosducin-like protein 3 (PDCL3) (Pongo abelii (Sumatran orangutan)).